A 154-amino-acid chain; its full sequence is Large-conductance mechanosensitive channel (154 aa).

The next 2 membrane-spanning stretches (helical) occupy residues 12–32 (GNIV…ALIT) and 71–91 (IVLS…FLVV). The segment at 129 to 154 (NGAPSGRHVDTADLTPTPNHEPRADT) is disordered.

This sequence belongs to the MscL family. Homopentamer.

It is found in the cell membrane. Channel that opens in response to stretch forces in the membrane lipid bilayer. May participate in the regulation of osmotic pressure changes within the cell. The protein is Large-conductance mechanosensitive channel of Mycobacterium leprae (strain Br4923).